The chain runs to 220 residues: HTH-type transcriptional repressor GlaR (220 aa).

An HTH gntR-type domain is found at M1 to M69. The segment at residues M29–S48 is a DNA-binding region (H-T-H motif).

Its subcellular location is the cytoplasm. The repressive effect at the glaH promoter site is specifically relieved upon glutarate binding. In terms of biological role, negatively regulates the expression of the glaH-lhgD-gabDTP operon in a temporal manner during entry into stationary phase or during the first few hours of carbon starvation. Thereby is involved in the regulation of a L-lysine degradation pathway that proceeds via cadaverine, glutarate and L-2-hydroxyglutarate. Binds to two primary and two secondary sites in the promoter region of the glaH operon with the consensus sequences TTGTN5TTTT and ATGTN5TTTT of the primary sites, each separated by six nucleotides. The chain is HTH-type transcriptional repressor GlaR from Escherichia coli (strain K12).